We begin with the raw amino-acid sequence, 480 residues long: MSIKPVVALIGRPNVGKSTLFNQFTKSRQALVADLSGLTRDRQYGDATYEDKAFIVVDTGGIGEADDGRGDIDDYMSEQSYTAIHEADIIVFVVDARAGMIGADAEIGKFLHTLGKPVYVVANKVDGVHDSAPAEFYALGLGEPYPMAASHGRGVGNLLEVLTADMPSQENVVEPRGLKLAIIGRPNVGKSTLVNRLLGEDRVVVFDMPGTTRDSIYIPYTREGKDYVLIDTAGVRRRGKIDEKVEKFSVIKTLQAIEDSNVTVIVIDAHEGIVDQDLHMIGYALDAGRALVVAINKWDGLTADQKNYIKIEMDRRFNFIPYVKVHQISALHGTGVGNLYPSILRAYQSSMFEVSTNRLTQILQDAVTANPPPTVAGRRIKLRYAHIGGHNPPVIVIHGNQTGSLPKSYQRYLENQFRQVFKLEGTPLNVVFKLNENPYANKSDTPTKAKTQQLRQRERNRAQKFTTKDKPRFTNKDKKR.

EngA-type G domains are found at residues 5 to 170 (PVVA…PSQE) and 178 to 351 (LKLA…QSSM). GTP is bound by residues 11–18 (GRPNVGKS), 58–62 (DTGGI), 123–126 (NKVD), 184–191 (GRPNVGKS), 231–235 (DTAGV), and 296–299 (NKWD). Residues 352–436 (FEVSTNRLTQ…PLNVVFKLNE (85 aa)) form the KH-like domain. Positions 438–454 (PYANKSDTPTKAKTQQL) are enriched in polar residues. Residues 438–480 (PYANKSDTPTKAKTQQLRQRERNRAQKFTTKDKPRFTNKDKKR) form a disordered region. The span at 455–480 (RQRERNRAQKFTTKDKPRFTNKDKKR) shows a compositional bias: basic and acidic residues.

The protein belongs to the TRAFAC class TrmE-Era-EngA-EngB-Septin-like GTPase superfamily. EngA (Der) GTPase family. As to quaternary structure, associates with the 50S ribosomal subunit.

Its function is as follows. GTPase that plays an essential role in the late steps of ribosome biogenesis. This Psychrobacter cryohalolentis (strain ATCC BAA-1226 / DSM 17306 / VKM B-2378 / K5) protein is GTPase Der.